Consider the following 209-residue polypeptide: uncharacterized protein (209 aa).

Disordered stretches follow at residues 1 to 80 (MFVR…PPVE) and 164 to 197 (LPAG…PGME). Residues 178–189 (SRGSSRSSCSQR) are compositionally biased toward low complexity.

This is an uncharacterized protein from Homo sapiens (Human).